The chain runs to 271 residues: Orotidine 5'-phosphate decarboxylase (271 aa).

Residue Lys97 is the Proton donor of the active site.

Belongs to the OMP decarboxylase family. Type 2 subfamily.

The enzyme catalyses orotidine 5'-phosphate + H(+) = UMP + CO2. Its pathway is pyrimidine metabolism; UMP biosynthesis via de novo pathway; UMP from orotate: step 2/2. This chain is Orotidine 5'-phosphate decarboxylase, found in Leptospira borgpetersenii serovar Hardjo-bovis (strain L550).